The following is an 820-amino-acid chain: Breast cancer anti-estrogen resistance protein 3 homolog (820 aa).

An N-acetylalanine modification is found at Ala-2. Ser-32, Ser-72, Ser-77, Ser-176, and Ser-284 each carry phosphoserine. The tract at residues 40-81 (DAYQDVSIHGTLPRKKKGPPSIRSCDNAGHSKSPRQSSPLTQ) is disordered. The region spanning 148-247 (WYHGRIPRQV…QSGAIIFQPI (100 aa)) is the SH2 domain. The residue at position 329 (Lys-329) is an N6-methyllysine. The disordered stretch occupies residues 346 to 367 (QSPSMDTSPCPSSPVFRTGSEP). A phosphoserine mark is found at Ser-353, Ser-358, and Ser-370. Arg-437 is subject to Omega-N-methylarginine. Position 466 is a phosphoserine (Ser-466). Residues 543–813 (DARVIAQHML…TALSRKLEPP (271 aa)) enclose the Ras-GEF domain. A mediates the interaction with BCAR1/p130CAS region spans residues 739–743 (LATAR).

As to quaternary structure, part of a complex comprised of PTPRA, BCAR1, BCAR3 (via SH2 domain) and SRC; the formation of the complex is dependent on integrin mediated-tyrosine phosphorylation of PTPRA. Within the complex, interacts (via SH2 domain) with PTPRA (when phosphorylated on 'Tyr-825'). Interacts (via Ras-GEF domain) with BCAR1. Interacts (via Ras-GEF domain) with NEDD9. Interacts with PTK2B/FAK1. Interacts with PTPN1. Interacts (via SH2 domain) with EGFR (when tyrosine-phosphorylated). In terms of processing, phosphorylated on tyrosine residues. Abundantly expressed in the lung and brain, with lower expression in splenic lymphocytes and liver (at protein level). Expressed in splenic lymphocytes (at protein level). Expressed in the lymph node cortical region, periphery of the splenic white pulp and in alveolar lung fibroblasts. Expressed in epithelial cells in the lens equatorial region and early stage nucleated cortical lens fiber cells. Expressed in the thymus. Expressed in B-cells.

The protein resides in the cytoplasm. It is found in the cell junction. The protein localises to the focal adhesion. Functionally, acts as an adapter protein downstream of several growth factor receptors to promote cell proliferation, migration, and redistribution of actin fibers. Specifically involved in INS/insulin signaling pathway by mediating MAPK1/ERK2-MAPK3/ERK1 activation and DNA synthesis. Promotes insulin-mediated membrane ruffling. In response to vasoconstrictor peptide EDN1, involved in the activation of RAP1 downstream of PTK2B via interaction with phosphorylated BCAR1. Inhibits cell migration and invasion via regulation of TGFB-mediated matrix digestion, actin filament rearrangement, and inhibition of invadopodia activity. May inhibit TGFB-SMAD signaling, via facilitating BCAR1 and SMAD2 and/or SMAD3 interaction. Regulates EGF-induced DNA synthesis. Required for the maintenance of ocular lens morphology and structural integrity, potentially via regulation of focal adhesion complex signaling. Acts upstream of PTPRA to regulate the localization of BCAR1 and PTPRA to focal adhesions, via regulation of SRC-mediated phosphorylation of PTPRA. Positively regulates integrin-induced tyrosine phosphorylation of BCAR1. Acts as a guanine nucleotide exchange factor (GEF) for small GTPases RALA, RAP1A and RRAS. However, in a contrasting study, lacks GEF activity towards RAP1. This Mus musculus (Mouse) protein is Breast cancer anti-estrogen resistance protein 3 homolog (Bcar3).